Consider the following 297-residue polypeptide: MIPLSIRVPASTANVGPGFDSVGIALSLYLHVVVKEKSNKWQVIHSFDESIPTDDKNLIVSTACKVSPSLSPYIIEVTSNIPLTRGLGSSASAIVAGIELANQLGNLNLTTDQKVQIATNFEGHPDNVAASILGGTVIGALDGKNVSVVRIESKELGVISLIPNEELNTDESRSVLPDVFPFHEAVKASAISNVLVAALCQKKWEVVGEMMERDHFHEPYRLELVPLLPSIRKCAKEFGAYGTALSGAGPSIFILTPYEKRQEIAEQLARVFTSMKVCELEIDHTGITVNKEERIEL.

ATP is bound at residue 82-92; the sequence is PLTRGLGSSAS.

The protein belongs to the GHMP kinase family. Homoserine kinase subfamily.

The protein localises to the cytoplasm. The catalysed reaction is L-homoserine + ATP = O-phospho-L-homoserine + ADP + H(+). It functions in the pathway amino-acid biosynthesis; L-threonine biosynthesis; L-threonine from L-aspartate: step 4/5. Catalyzes the ATP-dependent phosphorylation of L-homoserine to L-homoserine phosphate. This is Homoserine kinase from Bacillus cereus (strain ATCC 10987 / NRS 248).